A 114-amino-acid chain; its full sequence is Protein ORF3 (114 aa).

Hydrophobic stretches follow at residues 6 to 22 (CALGLFCCCSSCFCLCC) and 33 to 53 (AVVGGAAAVPAVVSGVTGLIL). The interaction with host HPX stretch occupies residues 28–68 (VSRLAAVVGGAAAVPAVVSGVTGLILSPSQSPIFIQPTPSP). Residues 48 to 72 (VTGLILSPSQSPIFIQPTPSPPMSP) are interaction with the capsid protein. A Phosphoserine; by host modification is found at Ser-71. Residues 72–114 (PLRPGLDLVFANPPDHSAPLGVTRPSAPPLPHVVDLPQLGPRR) form a homodimerization, and interaction with host AMBP/bikunin region. The segment at 91 to 114 (LGVTRPSAPPLPHVVDLPQLGPRR) is disordered. Residues 95–104 (RPSAPPLPHV) form an interaction with host SRC, HCK, FYN, PIK3R3 and GRB2 region. Residues 96 to 99 (PSAP) carry the PTAP/PSAP motif motif.

Belongs to the hepevirus ORF3 protein family. As to quaternary structure, forms homooligomers. Interacts with host SRC, HCK, FYN, PIK3R3 and GRB2 (via SH3 domain); binding does not activate the kinases. Interacts with host AMBP/bikunin and AMBP/alpha-1-microglobulin peptides. Interacts with host HPX/hemopexin. Interacts (when phosphorylated) with capsid protein ORF2. Interacts with host TSG101; this interaction plays a role in viral release from the host cell. Interacts with host SIRPA; this interaction down-regulates the phosphorylation of host IRF3. In terms of processing, palmitoylated in the N-terminus.

The protein localises to the host endoplasmic reticulum membrane. It localises to the host cytoplasm. The protein resides in the host cytoskeleton. Its subcellular location is the virion. It is found in the host cell membrane. Its function is as follows. Small multifunctional phosphoprotein involved in virion morphogenesis, egress and counteracting host innate immunity. Plays critical roles in the final steps of viral release by interacting with host TSG101, a member of the vacuolar protein-sorting pathway and using other cellular host proteins involved in vesicle formation pathway. Also acts as a viroporin and forms ion conductive pores allowing viral particle release. Impairs the generation of type I interferon by down-regulating host TLR3 and TLR7 as well as their downstream signaling pathways. Down-regulates the phosphorylation of host IRF3 via the interaction with host SIRP-alpha, thereby inhibiting IFN-I expression. Interacts with host microtubules. This Hepatitis E virus genotype 1 (isolate Human/Burma) (HEV-1) protein is Protein ORF3.